The primary structure comprises 297 residues: Putative peptidyl-prolyl cis-trans isomerase YacD (297 aa).

Positions 1 to 32 (MKSRTIWTIILGALLVCCIAVAYTLTKSQAGA) are cleaved as a signal peptide. The PpiC domain maps to 154-247 (DDSYRIRHIV…NGYAIIQLKE (94 aa)).

The catalysed reaction is [protein]-peptidylproline (omega=180) = [protein]-peptidylproline (omega=0). This chain is Putative peptidyl-prolyl cis-trans isomerase YacD (yacD), found in Bacillus subtilis (strain 168).